The chain runs to 902 residues: Translation initiation factor IF-2 (902 aa).

Basic and acidic residues-rich tracts occupy residues 1 to 12 and 43 to 60; these read MVDTKTPGDKKL and VVEK…EPHA. A disordered region spans residues 1-276; sequence MVDTKTPGDK…KPGPQKERGR (276 aa). Residues 69 to 84 show a composition bias toward pro residues; that stretch reads PAAPAPSRPAPPPAPP. The segment covering 111–174 has biased composition (basic and acidic residues); the sequence is AKLREVEERR…ETEAKKRFGE (64 aa). Low complexity-rich tracts occupy residues 181–190 and 198–237; these read AARPATAAPA and APAA…AVAA. Residues 398–567 form the tr-type G domain; sequence TRSPVVTVMG…MIALQADILD (170 aa). A G1 region spans residues 407-414; the sequence is GHVDHGKT. 407 to 414 contributes to the GTP binding site; that stretch reads GHVDHGKT. The interval 432-436 is G2; sequence GITQH. The segment at 455-458 is G3; that stretch reads DTPG. Residues 455 to 459 and 509 to 512 each bind GTP; these read DTPGH and NKID. A G4 region spans residues 509 to 512; the sequence is NKID. A G5 region spans residues 545–547; it reads SAK.

This sequence belongs to the TRAFAC class translation factor GTPase superfamily. Classic translation factor GTPase family. IF-2 subfamily.

It localises to the cytoplasm. One of the essential components for the initiation of protein synthesis. Protects formylmethionyl-tRNA from spontaneous hydrolysis and promotes its binding to the 30S ribosomal subunits. Also involved in the hydrolysis of GTP during the formation of the 70S ribosomal complex. The sequence is that of Translation initiation factor IF-2 from Bradyrhizobium diazoefficiens (strain JCM 10833 / BCRC 13528 / IAM 13628 / NBRC 14792 / USDA 110).